We begin with the raw amino-acid sequence, 438 residues long: V-type ATP synthase beta chain (438 aa).

The protein belongs to the ATPase alpha/beta chains family.

Its function is as follows. Produces ATP from ADP in the presence of a proton gradient across the membrane. The V-type beta chain is a regulatory subunit. This Chlamydia muridarum (strain MoPn / Nigg) protein is V-type ATP synthase beta chain (atpB).